Here is a 785-residue protein sequence, read N- to C-terminus: DNA ligase (785 aa).

NAD(+) contacts are provided by residues 32 to 36, 81 to 82, and E121; these read DAEYD and SL. K123 acts as the N6-AMP-lysine intermediate in catalysis. 4 residues coordinate NAD(+): R144, E181, K294, and K318. Positions 412, 415, 442, and 448 each coordinate Zn(2+). Residues 702-785 form the BRCT domain; it reads VEGLPEAGHT…AFLAKHNIPV (84 aa).

The protein belongs to the NAD-dependent DNA ligase family. LigA subfamily. It depends on Mg(2+) as a cofactor. Mn(2+) is required as a cofactor.

It carries out the reaction NAD(+) + (deoxyribonucleotide)n-3'-hydroxyl + 5'-phospho-(deoxyribonucleotide)m = (deoxyribonucleotide)n+m + AMP + beta-nicotinamide D-nucleotide.. Its function is as follows. DNA ligase that catalyzes the formation of phosphodiester linkages between 5'-phosphoryl and 3'-hydroxyl groups in double-stranded DNA using NAD as a coenzyme and as the energy source for the reaction. It is essential for DNA replication and repair of damaged DNA. This is DNA ligase from Pseudomonas fluorescens (strain SBW25).